We begin with the raw amino-acid sequence, 109 residues long: Nucleoid-associated protein PM0205 (109 aa).

It belongs to the YbaB/EbfC family. As to quaternary structure, homodimer.

The protein localises to the cytoplasm. The protein resides in the nucleoid. Its function is as follows. Binds to DNA and alters its conformation. May be involved in regulation of gene expression, nucleoid organization and DNA protection. The polypeptide is Nucleoid-associated protein PM0205 (Pasteurella multocida (strain Pm70)).